The following is a 419-amino-acid chain: UDP-N-acetylglucosamine 1-carboxyvinyltransferase (419 aa).

Residue 22-23 (KN) coordinates phosphoenolpyruvate. R91 serves as a coordination point for UDP-N-acetyl-alpha-D-glucosamine. C115 functions as the Proton donor in the catalytic mechanism. C115 carries the 2-(S-cysteinyl)pyruvic acid O-phosphothioketal modification. Residues 120–124 (RPVDL), 160–163 (KVSV), D305, and I327 each bind UDP-N-acetyl-alpha-D-glucosamine.

The protein belongs to the EPSP synthase family. MurA subfamily.

Its subcellular location is the cytoplasm. It carries out the reaction phosphoenolpyruvate + UDP-N-acetyl-alpha-D-glucosamine = UDP-N-acetyl-3-O-(1-carboxyvinyl)-alpha-D-glucosamine + phosphate. It participates in cell wall biogenesis; peptidoglycan biosynthesis. Functionally, cell wall formation. Adds enolpyruvyl to UDP-N-acetylglucosamine. In Klebsiella pneumoniae subsp. pneumoniae (strain ATCC 700721 / MGH 78578), this protein is UDP-N-acetylglucosamine 1-carboxyvinyltransferase.